Reading from the N-terminus, the 447-residue chain is Tryptophan 5-hydroxylase 1 (447 aa).

Residues 22 to 97 (TLIFSLENEV…TVLSVDSPDQ (76 aa)) form the ACT domain. Serine 61 is modified (phosphoserine; by PKA). L-tryptophan is bound by residues tyrosine 238, arginine 260, and threonine 268. Residues histidine 275, histidine 280, and glutamate 320 each coordinate Fe cation. Serine 339 and isoleucine 369 together coordinate L-tryptophan.

Belongs to the biopterin-dependent aromatic amino acid hydroxylase family. In terms of assembly, homotetramer. Interacts with DNAJC12. Requires Fe(2+) as cofactor. Ubiquitinated, leading to its degradation by the proteasome. Ubiquitinated is triggered by phosphorylation. Post-translationally, phosphorylated; triggering degradation by the proteasome.

It catalyses the reaction (6R)-L-erythro-5,6,7,8-tetrahydrobiopterin + L-tryptophan + O2 = 5-hydroxy-L-tryptophan + (4aS,6R)-4a-hydroxy-L-erythro-5,6,7,8-tetrahydrobiopterin. The protein operates within aromatic compound metabolism; serotonin biosynthesis; serotonin from L-tryptophan: step 1/2. Its function is as follows. Oxidizes L-tryptophan to 5-hydroxy-l-tryptophan in the rate-determining step of serotonin biosynthesis. The sequence is that of Tryptophan 5-hydroxylase 1 from Mus musculus (Mouse).